A 335-amino-acid chain; its full sequence is Glyceraldehyde-3-phosphate dehydrogenase 2 (335 aa).

Residues 13 to 14 (TI) and G111 each bind NAD(+). 140-142 (SCN) contributes to the D-glyceraldehyde 3-phosphate binding site. The Nucleophile role is filled by C141. An NAD(+)-binding site is contributed by R169. Residues T171 and 195–196 (HG) each bind D-glyceraldehyde 3-phosphate. NAD(+) is bound at residue Q300.

This sequence belongs to the glyceraldehyde-3-phosphate dehydrogenase family. As to quaternary structure, homotetramer.

It localises to the cytoplasm. The enzyme catalyses D-glyceraldehyde 3-phosphate + phosphate + NADP(+) = (2R)-3-phospho-glyceroyl phosphate + NADPH + H(+). It catalyses the reaction D-glyceraldehyde 3-phosphate + phosphate + NAD(+) = (2R)-3-phospho-glyceroyl phosphate + NADH + H(+). It participates in carbohydrate degradation; glycolysis; pyruvate from D-glyceraldehyde 3-phosphate: step 1/5. This chain is Glyceraldehyde-3-phosphate dehydrogenase 2 (gapB), found in Methanosarcina acetivorans (strain ATCC 35395 / DSM 2834 / JCM 12185 / C2A).